Reading from the N-terminus, the 223-residue chain is Transcriptional regulatory protein HprR (223 aa).

The Response regulatory domain maps to 2-115; sequence KILLIEDNQR…ELLARVRAQL (114 aa). Residue Asp51 is modified to 4-aspartylphosphate. A DNA-binding region (ompR/PhoB-type) is located at residues 122–220; the sequence is NSTLEISGLR…IRGMGYSFVA (99 aa).

Phosphorylated by HprS.

It is found in the cytoplasm. Member of a two-component regulatory system HprR/HprS involved in response to hydrogen peroxide. Regulates the expression of at least 5 operons, cyoABCDE, hprRS, hiuH, cusRS and cusCFBA. Bifunctional regulator that acts as an activator and a repressor. The chain is Transcriptional regulatory protein HprR from Escherichia coli (strain K12).